The primary structure comprises 1171 residues: ATP-dependent helicase/deoxyribonuclease subunit B (1171 aa).

The protein belongs to the helicase family. AddB/RexB type 2 subfamily. Heterodimer of AddA and RexB. Mg(2+) serves as cofactor.

Functionally, the heterodimer acts as both an ATP-dependent DNA helicase and an ATP-dependent, dual-direction single-stranded exonuclease. Recognizes the chi site generating a DNA molecule suitable for the initiation of homologous recombination. This subunit has 5' -&gt; 3' nuclease activity but not helicase activity. The protein is ATP-dependent helicase/deoxyribonuclease subunit B of Leuconostoc citreum (strain KM20).